The sequence spans 213 residues: 3-isopropylmalate dehydratase small subunit (213 aa).

It belongs to the LeuD family. LeuD type 1 subfamily. As to quaternary structure, heterodimer of LeuC and LeuD.

The enzyme catalyses (2R,3S)-3-isopropylmalate = (2S)-2-isopropylmalate. Its pathway is amino-acid biosynthesis; L-leucine biosynthesis; L-leucine from 3-methyl-2-oxobutanoate: step 2/4. Catalyzes the isomerization between 2-isopropylmalate and 3-isopropylmalate, via the formation of 2-isopropylmaleate. This chain is 3-isopropylmalate dehydratase small subunit, found in Neisseria meningitidis serogroup B (strain ATCC BAA-335 / MC58).